Consider the following 152-residue polypeptide: MTSTLNTLKSNSGSRKKKLRKGRGIAAGQGASCGFGMRGQKSRSGRPTRPGFEGGQMPLYRRVPKLKHFEIINQKNFSIINLEKLNDFKDNDTVNIDSLVKKGLIFKPKFPLKILGNGKINVKLKVQAHAFTKVAKQKIEAAGGSCELINNK.

The disordered stretch occupies residues 1 to 57 (MTSTLNTLKSNSGSRKKKLRKGRGIAAGQGASCGFGMRGQKSRSGRPTRPGFEGGQM). Over residues 14-23 (SRKKKLRKGR) the composition is skewed to basic residues. The span at 25-37 (IAAGQGASCGFGM) shows a compositional bias: gly residues.

This sequence belongs to the universal ribosomal protein uL15 family. As to quaternary structure, part of the 50S ribosomal subunit.

Its function is as follows. Binds to the 23S rRNA. This chain is Large ribosomal subunit protein uL15, found in Prochlorococcus marinus (strain MIT 9215).